Consider the following 296-residue polypeptide: Giardin subunit alpha-3 (296 aa).

Annexin repeat units lie at residues 3-72 (DTVT…SNCW), 74-146 (ELPV…TWIK), 153-222 (NNIN…TAHY), and 226-295 (GMNN…VLWR).

Belongs to the annexin family. Giardin subunit alpha subfamily.

Its subcellular location is the cytoplasm. It localises to the cytoskeleton. In terms of biological role, giardins are involved in parasite attachment to the intestinal mucosa and in the cytoskeletal disassembly and reassembly that marks the transition from infectious trophozoite to transmissible cyst. They may interact with other cytoskeletal proteins such as microtubules in the microribbons or crossbridges, to maintain the integrity of the ventral disk. This Giardia intestinalis (Giardia lamblia) protein is Giardin subunit alpha-3.